Consider the following 132-residue polypeptide: uncharacterized protein (132 aa).

The interval 1 to 68 (MCSAGELLRG…HTGEPVGDDY (68 aa)) is disordered. A helical transmembrane segment spans residues 100 to 120 (VIVIFFWVMLWFLGLQALGLV).

It belongs to the FAM241 family.

Its subcellular location is the membrane. This is an uncharacterized protein from Homo sapiens (Human).